Reading from the N-terminus, the 481-residue chain is Acyl-CoA ligase cnsG (481 aa).

Positions 3 to 11 (SPQLPPSMK) match the PTS2-type peroxisomal targeting signal motif. Residues 124–132 (KSGTTGNPK), 263–268 (NGYGMT), Asp353, and Arg368 each bind ATP. Thr268 contributes to the substrate binding site. CoA is bound by residues 376 to 378 (GGL) and 446 to 448 (AIF). Lys466 provides a ligand contact to ATP.

This sequence belongs to the ATP-dependent AMP-binding enzyme family.

It participates in alkaloid biosynthesis. Acyl-CoA ligase; part of the gene cluster that mediates the biosynthesis of communesins, a prominent class of indole alkaloids with great potential as pharmaceuticals. Communesins are biosynthesized by the coupling of tryptamine and aurantioclavine, two building blocks derived from L-tryptophan. The L-tryptophan decarboxylase cnsB converts L-tryptophan to tryptamine, whereas the tryptophan dimethylallyltransferase cnsF converts L-tryptophan to 4-dimethylallyl tryptophan which is further transformed to aurantioclavine by the aurantioclavine synthase cnsA, probably aided by the catalase cnsD. The cytochrome P450 monooxygenase cnsC catalyzes the heterodimeric coupling between the two different indole moieties, tryptamine and aurantioclavine, to construct vicinal quaternary stereocenters and yield the heptacyclic communesin scaffold. The O-methyltransferase cnsE then methylates the communesin scaffold to produce communesin K, the simplest characterized communesin that contains the heptacyclic core. The dioxygenase cnsJ converts communesin K into communesin I. Acylation to introduce the hexadienyl group at position N16 of communesin I by the acyltransferase cnsK leads to the production of communesin B. The hexadienyl group is produced by the highly reducing polyketide synthase cnsI, before being hydrolytically removed from cnsI by the serine hydrolase cnsH, converted into hexadienyl-CoA by the CoA ligase cnsG, and then transferred to communesin I by cnsK. Surprisingly, cnsK may also be a promiscuous acyltransferase that can tolerate a range of acyl groups, including acetyl-, propionyl-, and butyryl-CoA, which lead to communesins A, G and H respectively. The roles of the alpha-ketoglutarate-dependent dioxygenases cnsM and cnsP have still to be determined. The chain is Acyl-CoA ligase cnsG from Penicillium expansum (Blue mold rot fungus).